A 748-amino-acid chain; its full sequence is Catalase-peroxidase (748 aa).

The segment at residues W91–Y236 is a cross-link (tryptophyl-tyrosyl-methioninium (Trp-Tyr) (with M-262)). H92 acts as the Proton acceptor in catalysis. Residues A201–L223 are disordered. The span at K207–R221 shows a compositional bias: basic and acidic residues. The tryptophyl-tyrosyl-methioninium (Tyr-Met) (with W-91) cross-link spans Y236–M262. H277 is a heme b binding site.

It belongs to the peroxidase family. Peroxidase/catalase subfamily. Homodimer or homotetramer. Requires heme b as cofactor. Formation of the three residue Trp-Tyr-Met cross-link is important for the catalase, but not the peroxidase activity of the enzyme.

It carries out the reaction H2O2 + AH2 = A + 2 H2O. It catalyses the reaction 2 H2O2 = O2 + 2 H2O. Functionally, bifunctional enzyme with both catalase and broad-spectrum peroxidase activity. The polypeptide is Catalase-peroxidase (Bordetella avium (strain 197N)).